A 131-amino-acid polypeptide reads, in one-letter code: Translation initiation factor 5A (131 aa).

Position 36 is a hypusine (Lys36).

This sequence belongs to the eIF-5A family.

It is found in the cytoplasm. Its function is as follows. Functions by promoting the formation of the first peptide bond. The sequence is that of Translation initiation factor 5A (eIF5A) from Metallosphaera sedula (strain ATCC 51363 / DSM 5348 / JCM 9185 / NBRC 15509 / TH2).